The following is a 132-amino-acid chain: Agouti-signaling protein (132 aa).

Positions 1–22 are cleaved as a signal peptide; that stretch reads MDVTRLLLATLLVFLCFFTAYS. N-linked (GlcNAc...) asparagine glycosylation occurs at Asn-39. The segment at 61–87 is disordered; that stretch reads QISRKEAEKKRSSKKEASMKKVARPRT. The segment covering 63 to 79 has biased composition (basic and acidic residues); it reads SRKEAEKKRSSKKEASM. 5 disulfides stabilise this stretch: Cys-93–Cys-108, Cys-100–Cys-114, Cys-107–Cys-125, Cys-111–Cys-132, and Cys-116–Cys-123. The Agouti domain occupies 93–132; that stretch reads CVATRDSCKSPAPACCDPCASCQCRFFRSACSCRVLSLNC.

It localises to the secreted. Involved in the regulation of melanogenesis. The binding of ASP to MC1R precludes alpha-MSH initiated signaling and thus blocks production of cAMP, leading to a down-regulation of eumelanogenesis (brown/black pigment) and thus increasing synthesis of pheomelanin (yellow/red pigment). The polypeptide is Agouti-signaling protein (ASIP) (Macaca nigra (Celebes black macaque)).